Consider the following 796-residue polypeptide: Histone acetyltransferase KAT2B (796 aa).

Disordered regions lie at residues 1-32 (MSES…TECS), 77-97 (WKSQ…AEQP), and 371-408 (AGGG…DSKR). Residues 10-24 (GSPAVGAAGSAPAAP) are compositionally biased toward low complexity. Residues 81 to 94 (NPPPTPPPPTPPRA) show a composition bias toward pro residues. Positions 392–408 (GEKRKPAEPLSHEDSKR) are enriched in basic and acidic residues. In terms of domain architecture, N-acetyltransferase spans 469 to 617 (LNQKPNKKIL…GATLMGCELN (149 aa)). Glu536 serves as the catalytic Proton donor/acceptor. Acetyl-CoA-binding positions include 540-542 (CAV), 547-553 (QVKGYGT), and 578-581 (YAIG). Positions 687–791 (KDPDQLYSTL…KFFYTKIKEA (105 aa)) constitute a Bromo domain.

The protein belongs to the acetyltransferase family. GCN5 subfamily.

Its subcellular location is the nucleus. It localises to the cytoplasm. The protein resides in the cytoskeleton. It is found in the microtubule organizing center. The protein localises to the centrosome. It catalyses the reaction L-lysyl-[histone] + acetyl-CoA = N(6)-acetyl-L-lysyl-[histone] + CoA + H(+). The enzyme catalyses L-lysyl-[protein] + acetyl-CoA = N(6)-acetyl-L-lysyl-[protein] + CoA + H(+). It carries out the reaction spermidine + acetyl-CoA = N(8)-acetylspermidine + CoA + H(+). Its function is as follows. Functions as a histone acetyltransferase (HAT) to promote transcriptional activation. Has significant histone acetyltransferase activity with core histones (H3 and H4), and also with nucleosome core particles. Has a a strong preference for acetylation of H3 at 'Lys-9' (H3K9ac). Also acetylates non-histone proteins. Involved in heart and limb development by mediating acetylation of tbx5. Also acetylates spermidine. Together with kat2a, required for growth and differentiation of craniofacial cartilage and bone by regulating acetylation of histone H3 at 'Lys-9' (H3K9ac). The chain is Histone acetyltransferase KAT2B from Danio rerio (Zebrafish).